A 368-amino-acid chain; its full sequence is DNA replication and repair protein RecF (368 aa).

30-37 contributes to the ATP binding site; that stretch reads GRNGSGKT.

It belongs to the RecF family.

The protein localises to the cytoplasm. In terms of biological role, the RecF protein is involved in DNA metabolism; it is required for DNA replication and normal SOS inducibility. RecF binds preferentially to single-stranded, linear DNA. It also seems to bind ATP. The polypeptide is DNA replication and repair protein RecF (Chlorobaculum parvum (strain DSM 263 / NCIMB 8327) (Chlorobium vibrioforme subsp. thiosulfatophilum)).